The following is a 499-amino-acid chain: NAD(P)H-quinone oxidoreductase chain 4, chloroplastic (499 aa).

The next 14 membrane-spanning stretches (helical) occupy residues 4–24 (FPWL…IPFL), 31–51 (IIRW…TYIF), 87–107 (IGLI…AWPV), 113–133 (LFYF…ASQD), 134–154 (ILLF…LLAM), 167–187 (FILY…IMAF), 211–231 (IIIY…IPFH), 242–262 (HYST…YGLI), 274–294 (SFFA…AALT), 310–330 (VSHM…GLNG), 331–351 (AILQ…LAGI), 385–405 (SLAL…LGVI), 416–436 (IIII…LLSM), and 462–482 (IFIL…PNFV).

The protein belongs to the complex I subunit 4 family.

It localises to the plastid. Its subcellular location is the chloroplast thylakoid membrane. It catalyses the reaction a plastoquinone + NADH + (n+1) H(+)(in) = a plastoquinol + NAD(+) + n H(+)(out). It carries out the reaction a plastoquinone + NADPH + (n+1) H(+)(in) = a plastoquinol + NADP(+) + n H(+)(out). The protein is NAD(P)H-quinone oxidoreductase chain 4, chloroplastic (ndhD) of Marchantia polymorpha (Common liverwort).